Consider the following 420-residue polypeptide: Histidine--tRNA ligase (420 aa).

This sequence belongs to the class-II aminoacyl-tRNA synthetase family. In terms of assembly, homodimer.

Its subcellular location is the cytoplasm. It catalyses the reaction tRNA(His) + L-histidine + ATP = L-histidyl-tRNA(His) + AMP + diphosphate + H(+). The chain is Histidine--tRNA ligase from Desulforudis audaxviator (strain MP104C).